Here is a 216-residue protein sequence, read N- to C-terminus: Ras-related protein Rab-11A (216 aa).

G2 carries the post-translational modification N-acetylglycine. GTP is bound by residues S20, G21, V22, G23, K24, S25, N26, N37, L38, S40, S42, and T43. S25 is a Mg(2+) binding site. The Switch 1 motif lies at 36–47 (FNLESKSTIGVE). Residues T43 and D66 each contribute to the Mg(2+) site. Positions 67-86 (TAGQERYRAITSAYYRGAVG) match the Switch 2 motif. Positions 69, 124, 125, 127, 155, and 156 each coordinate GTP. Positions 183–211 (DRRENDMSPSNNVVPIHVPPTTENKPKVQ) are disordered. 2 S-geranylgeranyl cysteine lipidation sites follow: C212 and C213. C213 carries the cysteine methyl ester modification. Positions 214-216 (QNI) are cleaved as a propeptide — removed in mature form.

This sequence belongs to the small GTPase superfamily. Rab family. As to quaternary structure, interacts (GTP-bound form) with RAB11FIPs (via their C-termini) including RAB11FIP1, RAB11FIP2, RAB11FIP3, RAB11FIP4 and RAB11FIP5 effectors. Forms a complex with RAB11FIP3 and dynein intermediate chain DYNC1LI1; the interaction between RAB11A1 and RAB11FIP3 is direct; the complex regulates endocytic trafficking. Interacts with EVI5; EVI5 and RAB11FIP3 may be mutually exclusive and compete for binding RAB11A. Interacts with SGSM1, SGSM2, SGSM3 and VIPAS39. Interacts with EXOC6 in a GTP-dependent manner. Interacts with RAB11FIP5. Interacts with STXBP6. Interacts (GDP-bound form) with ZFYVE27. Interacts with BIRC6/bruce. May interact with TBC1D14. Interacts with UNC119; in a cell cycle-dependent manner. GDP-bound and nucleotide-free forms interact with SH3BP5. Interacts (GDP-bound form) with KIF5A in a ZFYVE27-dependent manner. Interacts (GDP-bound form) with RELCH. Found in a complex composed of RELCH, OSBP1 and RAB11A. Interacts with TBC1D12. Interacts with DEF6. Interacts with ATP9A. Forms a heterotetramer with RAB11FIP3; the GTP-bound form is preferred for binding. Forms a complex with Rabin8/RAB3IP and RAB11FIP3, probably a heterohexamer with two of each protein subunit, where Rabin8/RAB3IP and RAB11FIP3 simultaneously bind to RAB11A; the complex promotes preciliary trafficking and cilia growth. Forms a complex containing RAB11A, ASAP1, Rabin8/RAB3IP, RAP11FIP3 and ARF4; the complex promotes preciliary trafficking; the complex binds to RHO in photoreceptor cells and promotes RHO ciliary transport. Interacts (GTP-bound form) with WDR44; the interaction prevents RAB11A-RAB3IP-RAB11FIP3 complex formation. Requires Mg(2+) as cofactor. Detected in various tissues, such as brain, testis, spleen, and heart.

The protein localises to the cell membrane. The protein resides in the endosome membrane. It is found in the recycling endosome membrane. It localises to the cleavage furrow. Its subcellular location is the cytoplasmic vesicle. The protein localises to the phagosome. The protein resides in the cytoplasmic vesicle membrane. It is found in the golgi apparatus. It localises to the trans-Golgi network. It carries out the reaction GTP + H2O = GDP + phosphate + H(+). Its activity is regulated as follows. Regulated by guanine nucleotide exchange factors (GEFs) which promote the exchange of bound GDP for free GTP. Regulated by GTPase activating proteins (GAPs) which increase the GTP hydrolysis activity. Inhibited by GDP dissociation inhibitors (GDIs) which prevent Rab-GDP dissociation. Functionally, the small GTPases Rab are key regulators of intracellular membrane trafficking, from the formation of transport vesicles to their fusion with membranes. Rabs cycle between an inactive GDP-bound form and an active GTP-bound form that is able to recruit to membranes different set of downstream effectors directly responsible for vesicle formation, movement, tethering and fusion. The small Rab GTPase RAB11A regulates endocytic recycling. Forms a functional Rab11/RAB11FIP3/dynein complex that regulates the movement of peripheral sorting endosomes (SE) along microtubule tracks toward the microtubule organizing center/centrosome, generating the endosomal recycling compartment (ERC). Acts as a major regulator of membrane delivery during cytokinesis. Together with MYO5B and RAB8A participates in epithelial cell polarization. Together with Rabin8/RAB3IP, RAB8A, the exocyst complex, PARD3, PRKCI, ANXA2, CDC42 and DNMBP promotes transcytosis of PODXL to the apical membrane initiation sites (AMIS), apical surface formation and lumenogenesis. Together with MYO5B participates in CFTR trafficking to the plasma membrane and TF (Transferrin) recycling in nonpolarized cells. Required in a complex with MYO5B and RAB11FIP2 for the transport of NPC1L1 to the plasma membrane. Participates in the sorting and basolateral transport of CDH1 from the Golgi apparatus to the plasma membrane. Regulates the recycling of FCGRT (receptor of Fc region of monomeric IgG) to basolateral membranes. May also play a role in melanosome transport and release from melanocytes. Promotes Rabin8/RAB3IP preciliary vesicular trafficking to mother centriole by forming a ciliary targeting complex containing Rab11, ASAP1, Rabin8/RAB3IP, RAB11FIP3 and ARF4, thereby regulating ciliogenesis initiation. On the contrary, upon LPAR1 receptor signaling pathway activation, interaction with phosphorylated WDR44 prevents Rab11-RAB3IP-RAB11FIP3 complex formation and cilia growth. Participates in the export of a subset of neosynthesized proteins through a Rab8-Rab10-Rab11-endososomal dependent export route via interaction with WDR44. The polypeptide is Ras-related protein Rab-11A (Rattus norvegicus (Rat)).